Here is a 234-residue protein sequence, read N- to C-terminus: Cell fusion protein dni1 (234 aa).

The N-terminal stretch at 1-32 (MLFLHSVVQGTGTLCTLAAWILLALVMTGCQS) is a signal peptide. The Extracellular portion of the chain corresponds to 33-96 (STTSKFQLFS…RSKFLINEVH (64 aa)). The helical transmembrane segment at 97 to 117 (PWMIVFSFCVCGVSFLMGVVS) threads the bilayer. At 118 to 132 (SLPLIGRLEFLRNIR) the chain is on the cytoplasmic side. The helical transmembrane segment at 133–153 (ISLSFFSFFSILVTALFAHVA) threads the bilayer. The Extracellular portion of the chain corresponds to 154–178 (VSSFVMAVGNGTQNRVTASLGKKAM). A helical transmembrane segment spans residues 179-199 (IFLWCSMGLVTLTGITDSIIL). Residues 200–234 (LVTSRTKKIRKTILEKSKVLTPSSSFSSKSSTTKY) lie on the Cytoplasmic side of the membrane.

The protein belongs to the SUR7 family.

It localises to the cell membrane. Its subcellular location is the cell tip. Cell membrane protein which plays a relevant role in coordinating membrane organization and cell wall remodeling during mating. The protein is Cell fusion protein dni1 (dni1) of Schizosaccharomyces pombe (strain 972 / ATCC 24843) (Fission yeast).